A 146-amino-acid polypeptide reads, in one-letter code: Hemoglobin subunit beta (146 aa).

The Globin domain occupies 2–146 (HWTAEEKQLI…VAHALARKYH (145 aa)). Heme b contacts are provided by His-63 and His-92.

It belongs to the globin family. Heterotetramer of two alpha chains and two beta chains. Red blood cells.

Its function is as follows. Involved in oxygen transport from the lung to the various peripheral tissues. In Ara ararauna (Blue-and-yellow macaw), this protein is Hemoglobin subunit beta (HBB).